Reading from the N-terminus, the 654-residue chain is Probable Xaa-Pro aminopeptidase P (654 aa).

Mn(2+) is bound by residues Asp-449, Asp-460, Glu-558, and Glu-572.

The protein belongs to the peptidase M24B family. It depends on Mn(2+) as a cofactor.

It catalyses the reaction Release of any N-terminal amino acid, including proline, that is linked to proline, even from a dipeptide or tripeptide.. In terms of biological role, catalyzes the removal of a penultimate prolyl residue from the N-termini of peptides. This Neosartorya fischeri (strain ATCC 1020 / DSM 3700 / CBS 544.65 / FGSC A1164 / JCM 1740 / NRRL 181 / WB 181) (Aspergillus fischerianus) protein is Probable Xaa-Pro aminopeptidase P (ampp).